The following is a 317-amino-acid chain: Methionyl-tRNA formyltransferase (317 aa).

Residue 112–115 (SLLP) participates in (6S)-5,6,7,8-tetrahydrofolate binding.

Belongs to the Fmt family.

The enzyme catalyses L-methionyl-tRNA(fMet) + (6R)-10-formyltetrahydrofolate = N-formyl-L-methionyl-tRNA(fMet) + (6S)-5,6,7,8-tetrahydrofolate + H(+). Attaches a formyl group to the free amino group of methionyl-tRNA(fMet). The formyl group appears to play a dual role in the initiator identity of N-formylmethionyl-tRNA by promoting its recognition by IF2 and preventing the misappropriation of this tRNA by the elongation apparatus. The chain is Methionyl-tRNA formyltransferase from Mycoplasma mycoides subsp. mycoides SC (strain CCUG 32753 / NCTC 10114 / PG1).